The primary structure comprises 999 residues: uncharacterized protein (999 aa).

A compositionally biased stretch (low complexity) spans 45–128 (NSNNIGNGNG…TPTITPSSPS (84 aa)). The tract at residues 45–129 (NSNNIGNGNG…PTITPSSPSV (85 aa)) is disordered. Positions 723 to 767 (YQQSQQQQSQQQQQQQQQQQQQQQQQQQQQQQQQQQQQQQQQQQQ) form a coiled coil. Positions 873-887 (NDINNANNSNNNNNN) are enriched in low complexity. Residues 873–904 (NDINNANNSNNNNNNQSQVLLSPNRNKDGTLN) are disordered. A helical transmembrane segment spans residues 976-996 (LFSLVLILAFIWFFFEIYFFF).

Its subcellular location is the membrane. This is an uncharacterized protein from Dictyostelium discoideum (Social amoeba).